Consider the following 474-residue polypeptide: DNA-binding protein (474 aa).

The disordered stretch occupies residues 1–34; that stretch reads MAGRQREHPTVTPYLQETSPERPPPLPPKKKLRK. Tyrosine 142 bears the Phosphotyrosine; by host mark. Residues cysteine 231 and histidine 233 each contribute to the Zn(2+) site. A flexible loop region spans residues 244 to 278; it reads VEVDVGSENGQRALKEQPSKTKVVQNRWGRSVVQI. Positions 286, 302, 343, 345, 397, and 413 each coordinate Zn(2+). Residues 460–474 are C-terminal arm, DBP binding; it reads VALPTGHGDAEVEPF.

It belongs to the adenoviridae E2A DNA-binding protein family. Homomultimerizes on viral ssDNA bound to pTP. Forms a initiation complex with viral polymerase, pTP and hosts NFIA and POU2F1/OCT1. Interacts with host SRCAP.

The protein resides in the host nucleus. Functionally, plays a role in the elongation phase of viral strand displacement replication by unwinding the template in an ATP-independent fashion, employing its capacity to form multimers. Also enhances the rate of initiation. Released from template upon second strand synthesis. Assembles in complex with viral pTP, viral pol, host NFIA and host POU2F1/OCT1 on viral origin of replication. Covers the whole ssDNA genome during synthesis. The complementary strand synthesis induces its relese from DNA template. May inhibit cellular transcription mediated by the interaction between host SRCAP and CBP. The sequence is that of DNA-binding protein from Homo sapiens (Human).